A 195-amino-acid chain; its full sequence is Peroxisomal membrane protein 2 (195 aa).

The Cytoplasmic portion of the chain corresponds to M1–R30. A helical membrane pass occupies residues L31–L51. The Peroxisomal portion of the chain corresponds to A52–Y75. The chain crosses the membrane as a helical span at residues A76 to H96. Residues W97–R114 lie on the Cytoplasmic side of the membrane. Residues L115–K135 form a helical membrane-spanning segment. Residues D136 to K173 lie on the Peroxisomal side of the membrane. A helical transmembrane segment spans residues F174–G194.

This sequence belongs to the peroxisomal membrane protein PXMP2/4 family. Interacts with PEX19 and SIVA1.

It is found in the peroxisome membrane. In terms of biological role, seems to be involved in pore-forming activity and may contribute to the unspecific permeability of the peroxisomal membrane. The chain is Peroxisomal membrane protein 2 (PXMP2) from Homo sapiens (Human).